We begin with the raw amino-acid sequence, 674 residues long: L-type lectin-domain containing receptor kinase IV.3 (674 aa).

The signal sequence occupies residues 1–22; the sequence is MFFKLFTIFFFFIILLSKPLNS. Residues Asn-21, Asn-28, Asn-40, Asn-81, Asn-136, and Asn-188 are each glycosylated (N-linked (GlcNAc...) asparagine). At 23 to 296 the chain is on the extracellular side; that stretch reads SSQSLNFTYN…TSLQRFYKNR (274 aa). The legume-lectin like stretch occupies residues 26–263; sequence SLNFTYNSFH…SEHFVFGWSF (238 aa). A helical membrane pass occupies residues 297–317; sequence MPLFSLLLIPVLFVVSLIFLV. Residues 318 to 674 are Cytoplasmic-facing; the sequence is RFIVRRRRKF…IAYSIVSGGR (357 aa). A Protein kinase domain is found at 355–632; sequence FKDKDLLGSG…LQYLRGDATL (278 aa). ATP-binding positions include 361-369 and Lys-384; that span reads LGSGGFGRV. The active-site Proton acceptor is Asp-480.

It in the C-terminal section; belongs to the protein kinase superfamily. Ser/Thr protein kinase family. The protein in the N-terminal section; belongs to the leguminous lectin family.

It is found in the cell membrane. The enzyme catalyses L-seryl-[protein] + ATP = O-phospho-L-seryl-[protein] + ADP + H(+). The catalysed reaction is L-threonyl-[protein] + ATP = O-phospho-L-threonyl-[protein] + ADP + H(+). This chain is L-type lectin-domain containing receptor kinase IV.3 (LECRK43), found in Arabidopsis thaliana (Mouse-ear cress).